A 265-amino-acid chain; its full sequence is Eukaryotic translation initiation factor 3 subunit J (265 aa).

2 stretches are compositionally biased toward acidic residues: residues 1 to 12 (MAPERWDDEEDS) and 26 to 44 (DEEEDEVLDSWDAAEDSEV). Disordered regions lie at residues 1–113 (MAPE…DADL) and 212–265 (TMSN…DDFM). Composition is skewed to basic and acidic residues over residues 45–65 (EREKAAKAAEAKAKADAEAAA) and 73–86 (RIQEHKEERKKKAE). The stretch at 61-95 (AEAAAKKKSKSQRIQEHKEERKKKAEEEDSDSEEE) forms a coiled coil. Acidic residues predominate over residues 87-97 (EEDSDSEEEDD). Residues 216 to 228 (EKMREERAADKGS) are compositionally biased toward basic and acidic residues. Over residues 251-265 (DYDNGDDGLGDDDFM) the composition is skewed to acidic residues.

Belongs to the eIF-3 subunit J family. Component of the eukaryotic translation initiation factor 3 (eIF-3) complex.

The protein localises to the cytoplasm. Functionally, component of the eukaryotic translation initiation factor 3 (eIF-3) complex, which is involved in protein synthesis of a specialized repertoire of mRNAs and, together with other initiation factors, stimulates binding of mRNA and methionyl-tRNAi to the 40S ribosome. The eIF-3 complex specifically targets and initiates translation of a subset of mRNAs involved in cell proliferation. The polypeptide is Eukaryotic translation initiation factor 3 subunit J (hcr1) (Aspergillus oryzae (strain ATCC 42149 / RIB 40) (Yellow koji mold)).